Here is a 157-residue protein sequence, read N- to C-terminus: uncharacterized protein (157 aa).

Helical transmembrane passes span 3–23 (IFSFFSADFWQANSLCFMFIS), 24–44 (AFLSATVLPGNSEVIFVALAV), 47–67 (LMLGSLFNVDILALILIATAG), and 105–125 (IALLLSWLPVVGDLFCAIAGW).

This sequence to E.coli YqaA.

The protein resides in the cell membrane. This is an uncharacterized protein from Haemophilus influenzae (strain ATCC 51907 / DSM 11121 / KW20 / Rd).